A 2587-amino-acid polypeptide reads, in one-letter code: Clavatol synthase claF (2587 aa).

Residues 93-256 (LLSPLVVIVQ…TEVALSGRFH (164 aa)) form an N-terminal acylcarrier protein transacylase domain (SAT) region. Residue cysteine 137 is the Nucleophile; for transacylase activity of the active site. The active-site Proton donor/acceptor; for transacylase activity is the histidine 256. The Ketosynthase family 3 (KS3) domain occupies 383-799 (DDQIAVIGMA…GSNASMIITQ (417 aa)). Catalysis depends on for beta-ketoacyl synthase activity residues cysteine 548, histidine 683, and histidine 722. A malonyl-CoA:ACP transacylase (MAT) domain region spans residues 912–1222 (CFGGQISTYV…ESLPLLAEAT (311 aa)). Positions 1284 to 1416 (PKGLTTFIGF…GSIVFLPASD (133 aa)) are N-terminal hotdog fold. The PKS/mFAS DH domain occupies 1284–1595 (PKGLTTFIGF…YRLVPMDSMR (312 aa)). The tract at residues 1315-1593 (LTSANVALNT…ISYRLVPMDS (279 aa)) is product template (PT) domain. The segment at 1436 to 1595 (ASLLQGNGAD…YRLVPMDSMR (160 aa)) is C-terminal hotdog fold. Positions 1609–1635 (STAAVSSKSTPVHAPTPTTTVSSTPSS) are disordered. Residues 1617–1635 (STPVHAPTPTTTVSSTPSS) show a composition bias toward low complexity. In terms of domain architecture, Carrier spans 1654-1728 (PDISAKMCEI…SLVSCIRSTL (75 aa)). Serine 1688 is subject to O-(pantetheine 4'-phosphoryl)serine. Residues tyrosine 1947, histidine 2059, and glutamate 2085 each act as for methyltransferase activity in the active site. The methyltransferase (CMeT) domain stretch occupies residues 1952–2126 (VNTVWIKQLE…ATYWEKVLQS (175 aa)). The segment at 2208 to 2452 (SLSSGQCVLV…KILPELDGTL (245 aa)) is NADPH-binding (R) domain.

Requires pantetheine 4'-phosphate as cofactor.

The catalysed reaction is 3 malonyl-CoA + acetyl-CoA + AH2 + 2 S-adenosyl-L-methionine + H(+) = clavatol + A + 2 S-adenosyl-L-homocysteine + 3 CO2 + 4 CoA + H2O. It participates in secondary metabolite biosynthesis. In terms of biological role, non-reducing polyketide synthase; part of the cla gene cluster that produces clavatol and ortho-quinone methide. The clavatol biosynthesis cluster cla and the terrestric acid cluster tra are both involved in the production of peniphenones and penilactones. The non-reducing PKS claF is responsible for the formation of clavatol from successive condensations of 3 malonyl-CoA units, presumably with a simple acetyl-CoA starter unit, and 2 methylation steps. The esterase claE probably collaborates with claF by catalyzing the hydrolysis of ACP-bound acyl intermediates to free the ACP from stalled intermediates. The clavatol oxidase claD then converts clavatol to hydroxyclavatol. Spontaneous dehydration of hydroxyclavatol leads to the accumulation of the highly active ortho-quinone methide. On the other hand, the PKS-NRPS hybrid traA is involved in the formation of crustosic acid, with the help of traB and traD. The polyketide synthase module (PKS) of traA is responsible for the synthesis of the polyketide backbone via the condensation of an acetyl-CoA starter unit with 3 malonyl-CoA units. The downstream nonribosomal peptide synthetase (NRPS) module then amidates the carboxyl end of the polyketide with L-malic acid. Because traA lacks a designated enoylreductase (ER) domain, the required activity is provided the enoyl reductase traG. Crustosic acid undergoes decarboxylation and isomerization to the terrestric acid, catalyzed by the 2-oxoglutarate-dependent dioxygenase traH. Both acids are further converted to the 2 gamma-butyrolactones (R)-5-methyltetronic acid and (S)-5-carboxylmethyltetronic acid, with involvement of the cytochrome P450 monooxygenase claJ. Spontaneous addition of the methide to these gamma-butyrolactones leads to peniphenone D and penilactone D, which undergo again stereospecific attacking by methide to give penilactones A and B. The sequence is that of Clavatol synthase claF from Penicillium crustosum (Blue mold fungus).